We begin with the raw amino-acid sequence, 257 residues long: Phosphate import ATP-binding protein PstB (257 aa).

One can recognise an ABC transporter domain in the interval 4 to 246; it reads LKLNDVNIYY…KKIFENPDQK (243 aa). 36 to 43 is a binding site for ATP; the sequence is GPSGCGKS.

It belongs to the ABC transporter superfamily. Phosphate importer (TC 3.A.1.7) family. The complex is composed of two ATP-binding proteins (PstB), two transmembrane proteins (PstC and PstA) and a solute-binding protein (PstS).

It localises to the cell membrane. The catalysed reaction is phosphate(out) + ATP + H2O = ADP + 2 phosphate(in) + H(+). Part of the ABC transporter complex PstSACB involved in phosphate import. Responsible for energy coupling to the transport system. The chain is Phosphate import ATP-binding protein PstB from Corynebacterium glutamicum (strain ATCC 13032 / DSM 20300 / JCM 1318 / BCRC 11384 / CCUG 27702 / LMG 3730 / NBRC 12168 / NCIMB 10025 / NRRL B-2784 / 534).